The following is a 180-amino-acid chain: Large ribosomal subunit protein uL6 (180 aa).

The disordered stretch occupies residues 158-180; sequence YSGKGISYKGEKIRRKEGKTASK.

Belongs to the universal ribosomal protein uL6 family. In terms of assembly, part of the 50S ribosomal subunit.

Its function is as follows. This protein binds to the 23S rRNA, and is important in its secondary structure. It is located near the subunit interface in the base of the L7/L12 stalk, and near the tRNA binding site of the peptidyltransferase center. This chain is Large ribosomal subunit protein uL6, found in Mycoplasmopsis synoviae (strain 53) (Mycoplasma synoviae).